The chain runs to 63 residues: Cytochrome c oxidase subunit 5C-1 (63 aa).

The chain crosses the membrane as a helical span at residues 15–34; sequence SEVKELIIGSVLGLAAGGLW.

It belongs to the cytochrome c oxidase subunit 5C family.

The protein resides in the mitochondrion inner membrane. This protein is one of the nuclear-coded polypeptide chains of cytochrome c oxidase, the terminal oxidase in mitochondrial electron transport. This is Cytochrome c oxidase subunit 5C-1 (COX5C1) from Helianthus annuus (Common sunflower).